Consider the following 331-residue polypeptide: Probable allantoicase (331 aa).

This sequence belongs to the allantoicase family.

The catalysed reaction is allantoate + H2O = (S)-ureidoglycolate + urea. It functions in the pathway nitrogen metabolism; (S)-allantoin degradation; (S)-ureidoglycolate from allantoate (aminidohydrolase route): step 1/1. This chain is Probable allantoicase, found in Pseudomonas savastanoi pv. phaseolicola (strain 1448A / Race 6) (Pseudomonas syringae pv. phaseolicola (strain 1448A / Race 6)).